A 315-amino-acid polypeptide reads, in one-letter code: Ribosomal RNA small subunit methyltransferase H (315 aa).

S-adenosyl-L-methionine is bound by residues 37 to 39 (GGH), Asp57, Phe83, Asp105, and Gln112.

It belongs to the methyltransferase superfamily. RsmH family.

It is found in the cytoplasm. The enzyme catalyses cytidine(1402) in 16S rRNA + S-adenosyl-L-methionine = N(4)-methylcytidine(1402) in 16S rRNA + S-adenosyl-L-homocysteine + H(+). Its function is as follows. Specifically methylates the N4 position of cytidine in position 1402 (C1402) of 16S rRNA. In Pseudomonas putida (strain GB-1), this protein is Ribosomal RNA small subunit methyltransferase H.